An 88-amino-acid polypeptide reads, in one-letter code: Putative transmembrane protein ORF24 (88 aa).

3 consecutive transmembrane segments (helical) span residues 16–36 (LNMG…WAGM), 42–62 (AVFV…VTQF), and 64–84 (FIWF…VASI).

The protein resides in the host membrane. The chain is Putative transmembrane protein ORF24 from Haloarcula hispanica (His1V).